The primary structure comprises 225 residues: Small ribosomal subunit protein uS5 (225 aa).

The S5 DRBM domain occupies 57–120 (LEEQVLDVKL…AQAKLSLIKV (64 aa)).

It belongs to the universal ribosomal protein uS5 family. As to quaternary structure, part of the 30S ribosomal subunit. Contacts protein S4.

Its function is as follows. With S4 and S12 plays an important role in translational accuracy. The chain is Small ribosomal subunit protein uS5 from Methanococcus vannielii (strain ATCC 35089 / DSM 1224 / JCM 13029 / OCM 148 / SB).